Here is a 282-residue protein sequence, read N- to C-terminus: 4-diphosphocytidyl-2-C-methyl-D-erythritol kinase (282 aa).

Residue lysine 9 is part of the active site. Residue proline 98 to serine 108 participates in ATP binding. Aspartate 140 is a catalytic residue.

The protein belongs to the GHMP kinase family. IspE subfamily. Homodimer.

It catalyses the reaction 4-CDP-2-C-methyl-D-erythritol + ATP = 4-CDP-2-C-methyl-D-erythritol 2-phosphate + ADP + H(+). It functions in the pathway isoprenoid biosynthesis; isopentenyl diphosphate biosynthesis via DXP pathway; isopentenyl diphosphate from 1-deoxy-D-xylulose 5-phosphate: step 3/6. Its function is as follows. Catalyzes the phosphorylation of the position 2 hydroxy group of 4-diphosphocytidyl-2C-methyl-D-erythritol. The sequence is that of 4-diphosphocytidyl-2-C-methyl-D-erythritol kinase from Salmonella heidelberg (strain SL476).